A 772-amino-acid chain; its full sequence is TBC domain-containing protein C4G8.04 (772 aa).

Polar residues predominate over residues 143 to 161; sequence SFFPSSQEPSIPENPSSLT. Disordered regions lie at residues 143–163 and 275–294; these read SFFP…LTGE and KFFR…TFVS. The span at 275–291 shows a compositional bias: low complexity; the sequence is KFFRSSPRCSTPSVSST. Threonine 395 is subject to Phosphothreonine. The Rab-GAP TBC domain occupies 504–693; it reads GVPLCYKAKV…RIFDMLFCDG (190 aa).

This chain is TBC domain-containing protein C4G8.04, found in Schizosaccharomyces pombe (strain 972 / ATCC 24843) (Fission yeast).